Consider the following 201-residue polypeptide: Ribonuclease HII (201 aa).

Residues 12-201 (DLVAGVDEVG…VRELLDASVE (190 aa)) enclose the RNase H type-2 domain. 3 residues coordinate a divalent metal cation: aspartate 18, glutamate 19, and aspartate 110.

The protein belongs to the RNase HII family. Requires Mn(2+) as cofactor. The cofactor is Mg(2+).

It is found in the cytoplasm. The enzyme catalyses Endonucleolytic cleavage to 5'-phosphomonoester.. In terms of biological role, endonuclease that specifically degrades the RNA of RNA-DNA hybrids. This Pseudomonas paraeruginosa (strain DSM 24068 / PA7) (Pseudomonas aeruginosa (strain PA7)) protein is Ribonuclease HII.